The chain runs to 459 residues: Ribulose bisphosphate carboxylase large chain (459 aa).

Lysine 4 carries the N6,N6,N6-trimethyllysine modification. The substrate site is built by asparagine 113 and threonine 163. The Proton acceptor role is filled by lysine 165. Lysine 167 contacts substrate. Residues lysine 191, aspartate 193, and glutamate 194 each coordinate Mg(2+). At lysine 191 the chain carries N6-carboxylysine. The active-site Proton acceptor is histidine 284. Positions 285, 317, and 369 each coordinate substrate.

This sequence belongs to the RuBisCO large chain family. Type I subfamily. In terms of assembly, heterohexadecamer of 8 large chains and 8 small chains; disulfide-linked. The disulfide link is formed within the large subunit homodimers. Mg(2+) serves as cofactor. Post-translationally, the disulfide bond which can form in the large chain dimeric partners within the hexadecamer appears to be associated with oxidative stress and protein turnover.

The protein resides in the plastid. Its subcellular location is the chloroplast. The catalysed reaction is 2 (2R)-3-phosphoglycerate + 2 H(+) = D-ribulose 1,5-bisphosphate + CO2 + H2O. The enzyme catalyses D-ribulose 1,5-bisphosphate + O2 = 2-phosphoglycolate + (2R)-3-phosphoglycerate + 2 H(+). Its function is as follows. RuBisCO catalyzes two reactions: the carboxylation of D-ribulose 1,5-bisphosphate, the primary event in carbon dioxide fixation, as well as the oxidative fragmentation of the pentose substrate in the photorespiration process. Both reactions occur simultaneously and in competition at the same active site. This is Ribulose bisphosphate carboxylase large chain from Heuchera micrantha (Alum root).